We begin with the raw amino-acid sequence, 70 residues long: Large ribosomal subunit protein eL38 (70 aa).

It belongs to the eukaryotic ribosomal protein eL38 family.

This is Large ribosomal subunit protein eL38 (RpL38) from Drosophila melanogaster (Fruit fly).